Consider the following 364-residue polypeptide: tRNA 2-selenouridine synthase (364 aa).

Residues L14–W137 enclose the Rhodanese domain. C97 serves as the catalytic S-selanylcysteine intermediate.

The protein belongs to the SelU family. Monomer.

It catalyses the reaction 5-methylaminomethyl-2-thiouridine(34) in tRNA + selenophosphate + (2E)-geranyl diphosphate + H2O + H(+) = 5-methylaminomethyl-2-selenouridine(34) in tRNA + (2E)-thiogeraniol + phosphate + diphosphate. It carries out the reaction 5-methylaminomethyl-2-thiouridine(34) in tRNA + (2E)-geranyl diphosphate = 5-methylaminomethyl-S-(2E)-geranyl-thiouridine(34) in tRNA + diphosphate. The enzyme catalyses 5-methylaminomethyl-S-(2E)-geranyl-thiouridine(34) in tRNA + selenophosphate + H(+) = 5-methylaminomethyl-2-(Se-phospho)selenouridine(34) in tRNA + (2E)-thiogeraniol. The catalysed reaction is 5-methylaminomethyl-2-(Se-phospho)selenouridine(34) in tRNA + H2O = 5-methylaminomethyl-2-selenouridine(34) in tRNA + phosphate. Involved in the post-transcriptional modification of the uridine at the wobble position (U34) of tRNA(Lys), tRNA(Glu) and tRNA(Gln). Catalyzes the conversion of 2-thiouridine (S2U-RNA) to 2-selenouridine (Se2U-RNA). Acts in a two-step process involving geranylation of 2-thiouridine (S2U) to S-geranyl-2-thiouridine (geS2U) and subsequent selenation of the latter derivative to 2-selenouridine (Se2U) in the tRNA chain. The protein is tRNA 2-selenouridine synthase of Salmonella enteritidis PT4 (strain P125109).